We begin with the raw amino-acid sequence, 185 residues long: Coiled-coil domain-containing protein 32 (185 aa).

The stretch at 78–98 (LASLEKKLRRIKGLNQEVTSK) forms a coiled coil. A disordered region spans residues 159 to 185 (IPPESQVEKPVAEDEPAAGDKPAAAEQ).

As to quaternary structure, interacts with AP2S1; the interaction is direct and mediates association with adaptor protein complex 2 (AP-2).

The protein resides in the membrane. The protein localises to the coated pit. Functionally, regulates clathrin-mediated endocytsois of cargos such as transferrin probably through the association and modulation of adaptor protein complex 2 (AP-2). Has a role in ciliogenesis. Required for proper cephalic and left/right axis development. This chain is Coiled-coil domain-containing protein 32, found in Homo sapiens (Human).